Here is a 145-residue protein sequence, read N- to C-terminus: Transcriptional regulator MraZ (145 aa).

SpoVT-AbrB domains follow at residues 5-47 (EHQH…PLPE) and 76-119 (AVEC…AKDQ).

It belongs to the MraZ family. As to quaternary structure, forms oligomers.

The protein resides in the cytoplasm. The protein localises to the nucleoid. The sequence is that of Transcriptional regulator MraZ from Pelotomaculum thermopropionicum (strain DSM 13744 / JCM 10971 / SI).